We begin with the raw amino-acid sequence, 204 residues long: Small ribosomal subunit protein uS4 (204 aa).

The region spanning 93–156 is the S4 RNA-binding domain; it reads SRLSSVLYHS…AKIPVVVEAE (64 aa).

Belongs to the universal ribosomal protein uS4 family. In terms of assembly, part of the 30S ribosomal subunit. Contacts protein S5. The interaction surface between S4 and S5 is involved in control of translational fidelity.

Its function is as follows. One of the primary rRNA binding proteins, it binds directly to 16S rRNA where it nucleates assembly of the body of the 30S subunit. In terms of biological role, with S5 and S12 plays an important role in translational accuracy. In Wolbachia pipientis wMel, this protein is Small ribosomal subunit protein uS4.